Here is a 144-residue protein sequence, read N- to C-terminus: Tryparedoxin (144 aa).

One can recognise a Thioredoxin domain in the interval 2–144; the sequence is SGLAKYLPGA…PDGANFPWPN (143 aa). A disulfide bridge links Cys40 with Cys43.

It belongs to the thioredoxin family.

Functionally, acts as a thiol-disulfide oxidoreductase. It is spontaneously reduced by trypanothione. This is Tryparedoxin from Trypanosoma brucei brucei.